We begin with the raw amino-acid sequence, 150 residues long: Deoxyuridine 5'-triphosphate nucleotidohydrolase (150 aa).

Substrate-binding positions include 65–67 (RSG), asparagine 78, and 82–84 (TID). The tract at residues 130-150 (LSDTERGEGGFGHTGVASKAE) is disordered.

The protein belongs to the dUTPase family. The cofactor is Mg(2+).

The catalysed reaction is dUTP + H2O = dUMP + diphosphate + H(+). Its pathway is pyrimidine metabolism; dUMP biosynthesis; dUMP from dCTP (dUTP route): step 2/2. Functionally, this enzyme is involved in nucleotide metabolism: it produces dUMP, the immediate precursor of thymidine nucleotides and it decreases the intracellular concentration of dUTP so that uracil cannot be incorporated into DNA. The protein is Deoxyuridine 5'-triphosphate nucleotidohydrolase of Chlorobaculum parvum (strain DSM 263 / NCIMB 8327) (Chlorobium vibrioforme subsp. thiosulfatophilum).